The sequence spans 1021 residues: Ephrin type-B receptor 6 (1021 aa).

The N-terminal stretch at 1–31 (MATEGAAQLGNRVAGMVCSLWVLLLVSSVLA) is a signal peptide. Residues 32 to 594 (LEEVLLDTTG…LSSQLPERLS (563 aa)) are Extracellular-facing. The region spanning 33 to 237 (EEVLLDTTGE…FSYTCPAVLR (205 aa)) is the Eph LBD domain. The segment at 163 to 182 (SFPSSSSSSSSSSSAAWAVG) is disordered. Residues 166-176 (SSSSSSSSSSS) show a composition bias toward low complexity. Fibronectin type-III domains lie at 369 to 486 (PPSA…TSHE) and 487 to 582 (VPSA…TLPQ). N-linked (GlcNAc...) asparagine glycosylation is present at Asn480. The chain crosses the membrane as a helical span at residues 595–615 (LVIGSILGALAFLLLAAITVL). Over 616–1021 (AVVFQRKRRG…HLRQQGSVEV (406 aa)) the chain is Cytoplasmic. Residues 670–919 (IKIEEVIGTG…QLVAAFDKMI (250 aa)) enclose the Protein kinase domain. Residue 676-684 (IGTGSFGEV) coordinates ATP. The region spanning 948–1012 (PCLDSPQAWL…LHHIQLLQQH (65 aa)) is the SAM domain. Residues 1019–1021 (VEV) carry the PDZ-binding motif.

Belongs to the protein kinase superfamily. Tyr protein kinase family. Ephrin receptor subfamily. As to quaternary structure, interacts with CBL and EPHB1. Interacts with FYN; this interaction takes place in a ligand-independent manner. Ligand-binding increases phosphorylation on tyrosine residues. Phosphorylation on tyrosine residues is mediated by transphosphorylation by the catalytically active EPHB1 in a ligand-independent manner. Tyrosine phosphorylation of the receptor may act as a switch on the functional transition from cell adhesion/attraction to de-adhesion/repulsion. In terms of tissue distribution, expressed in brain. Expressed in non invasive breast carcinoma cell lines (at protein level). Strong expression in brain and pancreas, and weak expression in other tissues, such as heart, placenta, lung, liver, skeletal muscle and kidney. Expressed in breast non invasive tumors but not in metastatic lesions. Isoform 3 is expressed in cell lines of glioblastomas, anaplastic astrocytomas, gliosarcomas and astrocytomas. Isoform 3 is not detected in normal tissues.

The protein localises to the membrane. It is found in the secreted. Kinase-defective receptor for members of the ephrin-B family. Binds to ephrin-B1 and ephrin-B2. Modulates cell adhesion and migration by exerting both positive and negative effects upon stimulation with ephrin-B2. Inhibits JNK activation, T-cell receptor-induced IL-2 secretion and CD25 expression upon stimulation with ephrin-B2. The chain is Ephrin type-B receptor 6 (EPHB6) from Homo sapiens (Human).